The chain runs to 137 residues: Large ribosomal subunit protein uL16 (137 aa).

It belongs to the universal ribosomal protein uL16 family. In terms of assembly, part of the 50S ribosomal subunit.

Its function is as follows. Binds 23S rRNA and is also seen to make contacts with the A and possibly P site tRNAs. This is Large ribosomal subunit protein uL16 from Aromatoleum aromaticum (strain DSM 19018 / LMG 30748 / EbN1) (Azoarcus sp. (strain EbN1)).